We begin with the raw amino-acid sequence, 193 residues long: Adenine phosphoribosyltransferase (193 aa).

Belongs to the purine/pyrimidine phosphoribosyltransferase family. In terms of assembly, homodimer.

It is found in the cytoplasm. The enzyme catalyses AMP + diphosphate = 5-phospho-alpha-D-ribose 1-diphosphate + adenine. The protein operates within purine metabolism; AMP biosynthesis via salvage pathway; AMP from adenine: step 1/1. Catalyzes a salvage reaction resulting in the formation of AMP, that is energically less costly than de novo synthesis. This chain is Adenine phosphoribosyltransferase, found in Bifidobacterium animalis subsp. lactis (strain AD011).